A 454-amino-acid polypeptide reads, in one-letter code: UPF0210 protein Mhun_2657 (454 aa).

The protein belongs to the UPF0210 family.

The sequence is that of UPF0210 protein Mhun_2657 from Methanospirillum hungatei JF-1 (strain ATCC 27890 / DSM 864 / NBRC 100397 / JF-1).